We begin with the raw amino-acid sequence, 393 residues long: Lipid-A-disaccharide synthase (393 aa).

Belongs to the LpxB family.

It carries out the reaction a lipid X + a UDP-2-N,3-O-bis[(3R)-3-hydroxyacyl]-alpha-D-glucosamine = a lipid A disaccharide + UDP + H(+). The protein operates within bacterial outer membrane biogenesis; LPS lipid A biosynthesis. In terms of biological role, condensation of UDP-2,3-diacylglucosamine and 2,3-diacylglucosamine-1-phosphate to form lipid A disaccharide, a precursor of lipid A, a phosphorylated glycolipid that anchors the lipopolysaccharide to the outer membrane of the cell. The sequence is that of Lipid-A-disaccharide synthase from Colwellia psychrerythraea (strain 34H / ATCC BAA-681) (Vibrio psychroerythus).